A 358-amino-acid chain; its full sequence is Isopentenyl-diphosphate delta-isomerase (358 aa).

12–13 (RK) contacts substrate. FMN is bound by residues 69–71 (AMT), Ser-99, and Asn-128. Gln-158 lines the substrate pocket. Glu-159 contacts Mg(2+). Residues Lys-190, Thr-220, 267–269 (GIR), and 288–289 (AG) each bind FMN.

Belongs to the IPP isomerase type 2 family. As to quaternary structure, homooctamer. Dimer of tetramers. It depends on FMN as a cofactor. The cofactor is NADPH. Mg(2+) serves as cofactor.

It localises to the cytoplasm. It catalyses the reaction isopentenyl diphosphate = dimethylallyl diphosphate. In terms of biological role, involved in the biosynthesis of isoprenoids. Catalyzes the 1,3-allylic rearrangement of the homoallylic substrate isopentenyl (IPP) to its allylic isomer, dimethylallyl diphosphate (DMAPP). This Listeria monocytogenes serotype 4a (strain HCC23) protein is Isopentenyl-diphosphate delta-isomerase.